The chain runs to 107 residues: Proteinase inhibitor I-A (107 aa).

A signal peptide spans 1–22 (MVKFAHVVAFLLLASLIQPLTA). Positions 23–36 (RDLEINVLQLDVSQ) are excised as a propeptide.

This sequence belongs to the protease inhibitor I13 (potato type I serine protease inhibitor) family.

The protein resides in the secreted. The chain is Proteinase inhibitor I-A (TIMPB) from Nicotiana tabacum (Common tobacco).